Here is a 221-residue protein sequence, read N- to C-terminus: Immunoregulatory peptides (221 aa).

Residues 1–19 (MNYLCLVVTLVAVAGAISG) form the signal peptide. A propeptide spanning residues 20 to 45 (EKFSDDNTGYQSTPSLRIRTTPGRRR) is cleaved from the precursor. The segment at 21 to 155 (KFSDDNTGYQ…PRTIGPPYTR (135 aa)) is disordered. Polar residues predominate over residues 25-34 (DNTGYQSTPS). Over residues 48-69 (PRTIGPPYTRRTLRTTTDYSTT) the composition is skewed to low complexity. 2 stretches are compositionally biased toward polar residues: residues 70 to 85 (VENG…STEK) and 123 to 133 (NGTTPAANSTE). The propeptide occupies 191–221 (EISWTFGPLYTWRTTKGYGTTLETTNATSTS).

Salivary glands.

The protein localises to the secreted. In terms of biological role, suppress host inflammatory response. Exerts significant anti-inflammatory functions, either by directly inhibiting host secretion of inflammatory factors such as tumor necrosis factor-alpha (TNF), monocyte chemotactic protein-1 (CCL2), and interferon-gamma (IFNG) or by indirectly increasing the secretion of immunosuppressant cytokine of interleukin-10 (IL10). Also potently scavenges free radical in vitro in a rapid manner. All tested concentrations of this peptide have little effect on the cell viability. In vivo, inhibits hind paw adjuvant-induced inflammation in mouse in a dose-dependent manner. Suppress host inflammatory response. Exerts significant anti-inflammatory functions, either by directly inhibiting host secretion of inflammatory factors such as tumor necrosis factor-alpha (TNF), monocyte chemotactic protein-1 (CCL2), and interferon-gamma (IFNG) or by indirectly increasing the secretion of immunosuppressant cytokine of interleukin-10 (IL10). Also potently scavenges free radical in vitro in a rapid manner. Low concentrations of this peptide have little effect on the cell viability, whereas high concentrations increase the cell viability by 10-20%. In vivo, inhibits hind paw adjuvant-induced inflammation in mouse in a dose-dependent manner. Functionally, not studied but probably similar to Hyalomin-B1. This chain is Immunoregulatory peptides, found in Hyalomma asiaticum asiaticum (Tick).